Reading from the N-terminus, the 72-residue chain is Gene 35 protein (72 aa).

The sequence is that of Gene 35 protein (35) from Mycobacterium phage L5 (Mycobacteriophage L5).